A 450-amino-acid chain; its full sequence is MKVDLPESRLPSLYRDFRPLKDLNPDGYEANISTWRDFFLQQYISNSNRIIFTIGTRTLQELTHEVYGVPKSIDIAIDVLVNEGNLIPMELFNLGGMYTDNSRKGFWKWVRSWKESTNMYKSRKDETNFYLREDKFIIKANLEKEYQRFHELLKRSVFMEASSITDLVFTRNEFVTTESLQSFFSTYDEETKNVFLHFIENYKHIIVSKDNVIKVIAAEVEDITSRFSKGITENDLRIASVKVGIININKQITRLRKEINESNIKLRGPEFNELPKRIRIEYKQARLLSEKHLSRLLKFQNNLAQVRTQIDTSATNAVLIQTLSESNEVIKSINGYIGSTEKVEDLLDEIKEGHDRTEEVNDLLAHYNKGQDEEAEEEIERELEQLELDEKNNNKEENKNQDLHEPKESSSEDLLKRLNNLKINTNEGPVQDNENHDNEIRKIMMEEQPR.

The segment covering 387-416 (ELDEKNNNKEENKNQDLHEPKESSSEDLLK) has biased composition (basic and acidic residues). Residues 387–439 (ELDEKNNNKEENKNQDLHEPKESSSEDLLKRLNNLKINTNEGPVQDNENHDNE) form a disordered region.

This is an uncharacterized protein from Saccharomyces cerevisiae (strain ATCC 204508 / S288c) (Baker's yeast).